The sequence spans 243 residues: Adenosylcobinamide-GDP ribazoletransferase (243 aa).

6 consecutive transmembrane segments (helical) span residues 33–53 (FLPV…LLAP), 59–79 (IIIV…HIDG), 105–125 (IGAF…TLAY), 127–147 (TENM…VFAA), 172–192 (VISI…GAII), and 223–243 (TIEI…SIII).

The protein belongs to the CobS family. Requires Mg(2+) as cofactor.

The protein localises to the cell membrane. The enzyme catalyses alpha-ribazole + adenosylcob(III)inamide-GDP = adenosylcob(III)alamin + GMP + H(+). It carries out the reaction alpha-ribazole 5'-phosphate + adenosylcob(III)inamide-GDP = adenosylcob(III)alamin 5'-phosphate + GMP + H(+). It participates in cofactor biosynthesis; adenosylcobalamin biosynthesis; adenosylcobalamin from cob(II)yrinate a,c-diamide: step 7/7. Joins adenosylcobinamide-GDP and alpha-ribazole to generate adenosylcobalamin (Ado-cobalamin). Also synthesizes adenosylcobalamin 5'-phosphate from adenosylcobinamide-GDP and alpha-ribazole 5'-phosphate. The protein is Adenosylcobinamide-GDP ribazoletransferase of Alkaliphilus oremlandii (strain OhILAs) (Clostridium oremlandii (strain OhILAs)).